Here is a 238-residue protein sequence, read N- to C-terminus: 1-(5-phosphoribosyl)-5-[(5-phosphoribosylamino)methylideneamino] imidazole-4-carboxamide isomerase (238 aa).

Asp-8 (proton acceptor) is an active-site residue. Asp-129 serves as the catalytic Proton donor.

Belongs to the HisA/HisF family.

It is found in the cytoplasm. It catalyses the reaction 1-(5-phospho-beta-D-ribosyl)-5-[(5-phospho-beta-D-ribosylamino)methylideneamino]imidazole-4-carboxamide = 5-[(5-phospho-1-deoxy-D-ribulos-1-ylimino)methylamino]-1-(5-phospho-beta-D-ribosyl)imidazole-4-carboxamide. It functions in the pathway amino-acid biosynthesis; L-histidine biosynthesis; L-histidine from 5-phospho-alpha-D-ribose 1-diphosphate: step 4/9. The protein is 1-(5-phosphoribosyl)-5-[(5-phosphoribosylamino)methylideneamino] imidazole-4-carboxamide isomerase of Paracoccus denitrificans (strain Pd 1222).